Here is an 89-residue protein sequence, read N- to C-terminus: Three-finger toxin 3 (89 aa).

The signal sequence occupies residues methionine 1–leucine 16. Disulfide bonds link cysteine 24–cysteine 47, cysteine 40–cysteine 66, cysteine 70–cysteine 81, and cysteine 82–cysteine 87.

This sequence belongs to the three-finger toxin family. Ancestral subfamily. As to expression, expressed by the venom gland.

It localises to the secreted. The polypeptide is Three-finger toxin 3 (Sistrurus catenatus edwardsii (Desert massasauga)).